The chain runs to 143 residues: uncharacterized protein (143 aa).

In terms of domain architecture, HTH cro/C1-type spans 24–78 (IRQRRRWQNMSQAALGEAIGVTFQQVQKYEKGSNRVGAGRLQQISDALEVHPSYF). A DNA-binding region (H-T-H motif) is located at residues 35–54 (QAALGEAIGVTFQQVQKYEK).

This is an uncharacterized protein from Sinorhizobium fredii (strain NBRC 101917 / NGR234).